A 539-amino-acid chain; its full sequence is Membrane protein insertase YidC (539 aa).

5 helical membrane-spanning segments follow: residues threonine 6–alanine 26, serine 341–valine 361, leucine 416–leucine 436, leucine 454–isoleucine 474, and proline 495–valine 515.

The protein belongs to the OXA1/ALB3/YidC family. Type 1 subfamily. Interacts with the Sec translocase complex via SecD. Specifically interacts with transmembrane segments of nascent integral membrane proteins during membrane integration.

The protein localises to the cell inner membrane. Its function is as follows. Required for the insertion and/or proper folding and/or complex formation of integral membrane proteins into the membrane. Involved in integration of membrane proteins that insert both dependently and independently of the Sec translocase complex, as well as at least some lipoproteins. Aids folding of multispanning membrane proteins. This chain is Membrane protein insertase YidC, found in Vibrio vulnificus (strain CMCP6).